The primary structure comprises 488 residues: Ribulose bisphosphate carboxylase large chain 2 (488 aa).

Substrate is bound by residues N128 and T178. K180 acts as the Proton acceptor in catalysis. K182 serves as a coordination point for substrate. Mg(2+)-binding residues include K206, D208, and E209. N6-carboxylysine is present on K206. H298 acts as the Proton acceptor in catalysis. Substrate-binding residues include R299, H331, and S383.

This sequence belongs to the RuBisCO large chain family. Type I subfamily. As to quaternary structure, heterohexadecamer of 8 large chains and 8 small chains. Mg(2+) is required as a cofactor.

The enzyme catalyses 2 (2R)-3-phosphoglycerate + 2 H(+) = D-ribulose 1,5-bisphosphate + CO2 + H2O. It catalyses the reaction D-ribulose 1,5-bisphosphate + O2 = 2-phosphoglycolate + (2R)-3-phosphoglycerate + 2 H(+). Its function is as follows. RuBisCO catalyzes two reactions: the carboxylation of D-ribulose 1,5-bisphosphate, the primary event in carbon dioxide fixation, as well as the oxidative fragmentation of the pentose substrate. Both reactions occur simultaneously and in competition at the same active site. The chain is Ribulose bisphosphate carboxylase large chain 2 from Nitrobacter hamburgensis (strain DSM 10229 / NCIMB 13809 / X14).